We begin with the raw amino-acid sequence, 301 residues long: 4-hydroxy-tetrahydrodipicolinate synthase (301 aa).

Residue Thr53 participates in pyruvate binding. The active-site Proton donor/acceptor is Tyr142. The Schiff-base intermediate with substrate role is filled by Lys170. Pyruvate is bound at residue Val212.

This sequence belongs to the DapA family. In terms of assembly, homotetramer; dimer of dimers.

It localises to the cytoplasm. The enzyme catalyses L-aspartate 4-semialdehyde + pyruvate = (2S,4S)-4-hydroxy-2,3,4,5-tetrahydrodipicolinate + H2O + H(+). Its pathway is amino-acid biosynthesis; L-lysine biosynthesis via DAP pathway; (S)-tetrahydrodipicolinate from L-aspartate: step 3/4. Functionally, catalyzes the condensation of (S)-aspartate-beta-semialdehyde [(S)-ASA] and pyruvate to 4-hydroxy-tetrahydrodipicolinate (HTPA). This is 4-hydroxy-tetrahydrodipicolinate synthase from Synechocystis sp. (strain ATCC 27184 / PCC 6803 / Kazusa).